A 238-amino-acid chain; its full sequence is Ribosomal RNA small subunit methyltransferase G (238 aa).

S-adenosyl-L-methionine contacts are provided by residues Gly77, Phe82, 128 to 129 (AE), and Arg146. Positions 216 to 238 (KKRQTPKKYPRKPGTPNKEPLLK) are disordered.

It belongs to the methyltransferase superfamily. RNA methyltransferase RsmG family.

Its subcellular location is the cytoplasm. Functionally, specifically methylates the N7 position of guanine in position 535 of 16S rRNA. This is Ribosomal RNA small subunit methyltransferase G from Macrococcus caseolyticus (strain JCSC5402) (Macrococcoides caseolyticum).